A 92-amino-acid polypeptide reads, in one-letter code: Small ribosomal subunit protein uS19 (92 aa).

Belongs to the universal ribosomal protein uS19 family.

Functionally, protein S19 forms a complex with S13 that binds strongly to the 16S ribosomal RNA. The polypeptide is Small ribosomal subunit protein uS19 (Gloeobacter violaceus (strain ATCC 29082 / PCC 7421)).